The primary structure comprises 265 residues: Adenosine 5'-phosphosulfate reductase (265 aa).

Residues Cys-135, Cys-136, Cys-218, and Cys-221 each coordinate [4Fe-4S] cluster. Cys-246 (nucleophile; cysteine thiosulfonate intermediate) is an active-site residue.

It belongs to the PAPS reductase family. CysH subfamily. [4Fe-4S] cluster is required as a cofactor.

The protein resides in the cytoplasm. It carries out the reaction [thioredoxin]-disulfide + sulfite + AMP + 2 H(+) = adenosine 5'-phosphosulfate + [thioredoxin]-dithiol. Its pathway is sulfur metabolism; hydrogen sulfide biosynthesis; sulfite from sulfate. Catalyzes the formation of sulfite from adenosine 5'-phosphosulfate (APS) using thioredoxin as an electron donor. The polypeptide is Adenosine 5'-phosphosulfate reductase (Rhizobium meliloti (strain 1021) (Ensifer meliloti)).